The sequence spans 956 residues: MAM domain-containing glycosylphosphatidylinositol anchor protein 1 (956 aa).

A signal peptide spans 1–18 (MEVTCLLLLALIPFHCRG). Ig-like domains lie at 24-123 (PAQA…KSIR) and 132-230 (PVLT…KAIT). Asn-42 carries an N-linked (GlcNAc...) asparagine glycan. Intrachain disulfides connect Cys-60–Cys-108 and Cys-157–Cys-214. N-linked (GlcNAc...) asparagine glycosylation is found at Asn-235, Asn-247, Asn-257, and Asn-307. 4 consecutive Ig-like domains span residues 240-323 (PALK…KTVN), 338-432 (PDMI…IEVN), 440-532 (PTIS…AQVQ), and 539-650 (PEVE…PTRS). Intrachain disulfides connect Cys-262–Cys-308 and Cys-357–Cys-415. Asn-432 carries an N-linked (GlcNAc...) asparagine glycan. Intrachain disulfides connect Cys-463/Cys-514 and Cys-560/Cys-616. One can recognise a Fibronectin type-III domain in the interval 627-744 (CLFQVSAKAY…SRIIHYTEPI (118 aa)). One can recognise an MAM domain in the interval 752-919 (NTCHFEDEKI…VTLKKGECPR (168 aa)). The span at 780–789 (LTQNPKRSPN) shows a compositional bias: polar residues. Residues 780–799 (LTQNPKRSPNTGPPTDISGT) form a disordered region. A lipid anchor (GPI-anchor amidated serine) is attached at Ser-933. Residues 934–956 (GAPRLSSLQLWGSMAIFLLALQR) constitute a propeptide, removed in mature form.

Interacts heterophilically through its MAM domain with proteins in axon-rich regions and through its Ig-like domains with proteins in differentiating muscle. Interacts (through the Ig-like domains) with NLGN2. In terms of tissue distribution, expressed by neurons in layers 2 and 3 of the cortex during their migration and settling in the cortical plate. Also found in layers 4 and 6a. From 9.5 dpc-13.5 dpc, detected in the marginal zone of the developing cortex. At 16.5 dpc, modest expression is found in the intermediate zone. At postnatal day 1, evident in the superficial cortical plate. By postnatal day 7, expression is limited to layers 2 and 3 throughout most of the cortex.

It localises to the cell membrane. Its function is as follows. Required for radial migration of cortical neurons in the superficial layer of the neocortex. Plays a role in the formation or maintenance of inhibitory synapses. May function by inhibiting the activity of NLGN2. The polypeptide is MAM domain-containing glycosylphosphatidylinositol anchor protein 1 (Mus musculus (Mouse)).